The primary structure comprises 221 residues: Octanoyltransferase (221 aa).

The 189-residue stretch at 14 to 202 (GVRPDTLWFL…MLGARNAPHP (189 aa)) folds into the BPL/LPL catalytic domain. Substrate-binding positions include 54-61 (RGGLLTYH), 128-130 (SIG), and 141-143 (GFA). C159 functions as the Acyl-thioester intermediate in the catalytic mechanism. The segment at 197–221 (RNAPHPPAPNLSSGDLGTGTRAGRT) is disordered.

Belongs to the LipB family.

It is found in the cytoplasm. It catalyses the reaction octanoyl-[ACP] + L-lysyl-[protein] = N(6)-octanoyl-L-lysyl-[protein] + holo-[ACP] + H(+). It participates in protein modification; protein lipoylation via endogenous pathway; protein N(6)-(lipoyl)lysine from octanoyl-[acyl-carrier-protein]: step 1/2. Its function is as follows. Catalyzes the transfer of endogenously produced octanoic acid from octanoyl-acyl-carrier-protein onto the lipoyl domains of lipoate-dependent enzymes. Lipoyl-ACP can also act as a substrate although octanoyl-ACP is likely to be the physiological substrate. This Frankia casuarinae (strain DSM 45818 / CECT 9043 / HFP020203 / CcI3) protein is Octanoyltransferase.